The sequence spans 166 residues: 2-amino-4-hydroxy-6-hydroxymethyldihydropteridine pyrophosphokinase (166 aa).

The protein belongs to the HPPK family.

The enzyme catalyses 6-hydroxymethyl-7,8-dihydropterin + ATP = (7,8-dihydropterin-6-yl)methyl diphosphate + AMP + H(+). It functions in the pathway cofactor biosynthesis; tetrahydrofolate biosynthesis; 2-amino-4-hydroxy-6-hydroxymethyl-7,8-dihydropteridine diphosphate from 7,8-dihydroneopterin triphosphate: step 4/4. Its function is as follows. Catalyzes the transfer of pyrophosphate from adenosine triphosphate (ATP) to 6-hydroxymethyl-7,8-dihydropterin, an enzymatic step in folate biosynthesis pathway. In Streptococcus pyogenes serotype M1, this protein is 2-amino-4-hydroxy-6-hydroxymethyldihydropteridine pyrophosphokinase (folK).